The following is a 274-amino-acid chain: Protein STAY-GREEN, chloroplastic (274 aa).

The transit peptide at 1–48 (MAAATSTMSLIPPITQQQRWHAADSLVVLASRRHDSRRRRRCRYVVPR) directs the protein to the chloroplast.

It belongs to the staygreen family.

Its subcellular location is the plastid. The protein resides in the chloroplast. In terms of biological role, involved in the disassembling mechanism of the intact light-harvesting complex of photosystem II (LHCPII) in the thylakoid membranes. Required to trigger chlorophyll degradation during natural and dark-induced leaf senescence. In Oryza sativa subsp. indica (Rice), this protein is Protein STAY-GREEN, chloroplastic (SGR).